Reading from the N-terminus, the 168-residue chain is Acetone carboxylase gamma subunit (168 aa).

In terms of assembly, heterohexamer of two alpha, two beta and two gamma subunits. Fe cation serves as cofactor. Mg(2+) is required as a cofactor. The cofactor is Zn(2+).

The catalysed reaction is acetone + hydrogencarbonate + 2 ATP + 3 H2O = acetoacetate + 2 AMP + 4 phosphate + 4 H(+). Its function is as follows. Catalyzes the carboxylation of acetone to form acetoacetate. Has a reduced activity on butanone, and no activity on 2-pentatone, 3-pentatone, 2-hexanone, chloroacetone, pyruvate, phosphoenolpyruvate, acetaldehyde, propionaldehyde and propylene oxide. The protein is Acetone carboxylase gamma subunit of Xanthobacter autotrophicus (strain ATCC BAA-1158 / Py2).